Reading from the N-terminus, the 247-residue chain is Ubiquinone biosynthesis O-methyltransferase (247 aa).

Residues Arg41, Gly72, Asp93, and Met136 each coordinate S-adenosyl-L-methionine.

The protein belongs to the methyltransferase superfamily. UbiG/COQ3 family.

It carries out the reaction a 3-demethylubiquinol + S-adenosyl-L-methionine = a ubiquinol + S-adenosyl-L-homocysteine + H(+). It catalyses the reaction a 3-(all-trans-polyprenyl)benzene-1,2-diol + S-adenosyl-L-methionine = a 2-methoxy-6-(all-trans-polyprenyl)phenol + S-adenosyl-L-homocysteine + H(+). Its pathway is cofactor biosynthesis; ubiquinone biosynthesis. Its function is as follows. O-methyltransferase that catalyzes the 2 O-methylation steps in the ubiquinone biosynthetic pathway. This is Ubiquinone biosynthesis O-methyltransferase from Bartonella tribocorum (strain CIP 105476 / IBS 506).